A 301-amino-acid chain; its full sequence is Protoheme IX farnesyltransferase (301 aa).

9 consecutive transmembrane segments (helical) span residues 9–29 (VLAY…VATI), 42–62 (IALI…ANSL), 89–109 (TSHA…WLWW), 113–133 (LLAG…YTMV), 142–162 (VVWG…AVTG), 168–188 (PIVL…ALAM), 211–231 (VTKQ…TLVP), 232–252 (AAGV…LLMA), and 280–300 (VVFV…GSLL).

Belongs to the UbiA prenyltransferase family. Protoheme IX farnesyltransferase subfamily.

Its subcellular location is the cell membrane. It carries out the reaction heme b + (2E,6E)-farnesyl diphosphate + H2O = Fe(II)-heme o + diphosphate. The protein operates within porphyrin-containing compound metabolism; heme O biosynthesis; heme O from protoheme: step 1/1. Converts heme B (protoheme IX) to heme O by substitution of the vinyl group on carbon 2 of heme B porphyrin ring with a hydroxyethyl farnesyl side group. This chain is Protoheme IX farnesyltransferase, found in Rhodococcus jostii (strain RHA1).